We begin with the raw amino-acid sequence, 451 residues long: Phenylalanine--tRNA ligase, mitochondrial (451 aa).

Residues 157–160, Arg-179, 186–188, and 193–195 contribute to the substrate site; these read SAHQ, QHY, and QLE. Position 202 is an N6-acetyllysine (Lys-202). Substrate is bound by residues Glu-287 and Phe-312. Positions 358 to 450 constitute an FDX-ACB domain; that stretch reads SKYPAVINDI…AVQLLGVEGR (93 aa).

This sequence belongs to the class-II aminoacyl-tRNA synthetase family. Monomer.

The protein resides in the mitochondrion matrix. The protein localises to the mitochondrion. The enzyme catalyses tRNA(Phe) + L-phenylalanine + ATP = L-phenylalanyl-tRNA(Phe) + AMP + diphosphate + H(+). Its function is as follows. Is responsible for the charging of tRNA(Phe) with phenylalanine in mitochondrial translation. To a lesser extent, also catalyzes direct attachment of m-Tyr (an oxidized version of Phe) to tRNA(Phe), thereby opening the way for delivery of the misacylated tRNA to the ribosome and incorporation of ROS-damaged amino acid into proteins. The sequence is that of Phenylalanine--tRNA ligase, mitochondrial (FARS2) from Homo sapiens (Human).